Reading from the N-terminus, the 362-residue chain is Notoamide biosynthesis cluster protein J' (362 aa).

Positions 1-22 are cleaved as a signal peptide; sequence MRNMATMLHLLTLILLTSPAST. 4 N-linked (GlcNAc...) asparagine glycosylation sites follow: Asn157, Asn190, Asn280, and Asn338.

Functionally, part of the gene cluster that mediates the biosynthesis of notoamide, a fungal indole alkaloid that belongs to a family of natural products containing a characteristic bicyclo[2.2.2]diazaoctane core. The first step of notoamide biosynthesis involves coupling of L-proline and L-tryptophan by the bimodular NRPS notE', to produce cyclo-L-tryptophan-L-proline called brevianamide F. The reverse prenyltransferase notF' then acts as a deoxybrevianamide E synthase and converts brevianamide F to deoxybrevianamide E via reverse prenylation at C-2 of the indole ring leading to the bicyclo[2.2.2]diazaoctane core. Deoxybrevianamide E is further hydroxylated at C-6 of the indole ring, likely catalyzed by the cytochrome P450 monooxygenase notG', to yield 6-hydroxy-deoxybrevianamide E. 6-hydroxy-deoxybrevianamide E is a specific substrate of the prenyltransferase notC' for normal prenylation at C-7 to produce 6-hydroxy-7-prenyl-deoxybrevianamide, also called notoamide S. As the proposed pivotal branching point in notoamide biosynthesis, notoamide S can be diverted to notoamide E through an oxidative pyran ring closure putatively catalyzed by either notH' cytochrome P450 monooxygenase or the notD' FAD-linked oxidoreductase. This step would be followed by an indole 2,3-epoxidation-initiated pinacol-like rearrangement catalyzed by the notB' FAD-dependent monooxygenase leading to the formation of notoamide C and notoamide D. On the other hand notoamide S is converted to notoamide T by notH' (or notD'), a bifunctional oxidase that also functions as the intramolecular Diels-Alderase responsible for generation of (-)-notoamide T. To generate antipodal (+)-notoaminide T, notH (or notD) in Aspergillus strain MF297-2 is expected to catalyze a Diels-Alder reaction leading to the opposite stereochemistry. The remaining oxidoreductase notD' (or notH') likely catalyzes the oxidative pyran ring formation to yield (-)-stephacidin A. The FAD-dependent monooxygenase notI' is highly similar to notB' and is predicted to catalyze a similar conversion from (-)-stephacidin A to (+)-notoamide B via the 2,3-epoxidation of (-)-stephacidin A followed by a pinacol-type rearrangement. Finally, it remains unclear which enzyme could be responsible for the final hydroxylation steps leading to notoamide A and sclerotiamide. The function of notJ' in the notoamide biosynthesis has not been determined yet. This chain is Notoamide biosynthesis cluster protein J', found in Aspergillus versicolor.